A 1012-amino-acid chain; its full sequence is Structural polyprotein (1012 aa).

Position 30 (D30) interacts with a divalent metal cation. Positions 513–755 (ADKGYEVVAN…AGRQYDLAMA (243 aa)) constitute a Peptidase S50 domain. Residue S652 is the Nucleophile of the active site. K692 is an active-site residue. The disordered stretch occupies residues 971 to 1012 (EMKHRNPRRAPPKPKPKPNVPTQRPPGRLGRWIRAVSDEDLE). Over residues 975-986 (RNPRRAPPKPKP) the composition is skewed to basic residues. Residues 1003–1012 (IRAVSDEDLE) form an interaction with VP1 protein region.

Homotrimer. A central divalent metal stabilizes the VP2 trimer. Interacts with host ITGA4/ITGB1. In terms of assembly, homodimer. Interacts (via C-terminus) with VP1 in the cytoplasm. Interacts with VP2. Specific enzymatic cleavages yield mature proteins. The capsid assembly seems to be regulated by polyprotein processing. The protease VP4 cleaves itself off the polyprotein, thus releasing pre-VP2 and VP3 within the infected cell. During capsid assembly, the C-terminus of pre-VP2 is further processed by VP4, giving rise to VP2, the external capsid protein and three small peptides that all stay closely associated with the capsid.

It is found in the virion. The protein localises to the host cytoplasm. In terms of biological role, capsid protein VP2 self assembles to form an icosahedral capsid with a T=13 symmetry, about 70 nm in diameter, and consisting of 260 VP2 trimers. The capsid encapsulates the genomic dsRNA. VP2 is also involved in attachment and entry into the host cell by interacting with host ITGA4/ITGB1. Its function is as follows. The precursor of VP2 plays an important role in capsid assembly. First, pre-VP2 and VP2 oligomers assemble to form a procapsid. Then, the pre-VP2 intermediates may be processed into VP2 proteins by proteolytic cleavage mediated by VP4 to obtain the mature virion. The final capsid is composed of pentamers and hexamers but VP2 has a natural tendency to assemble into all-pentameric structures. Therefore pre-VP2 may be required to allow formation of the hexameric structures. Protease VP4 is a serine protease that cleaves the polyprotein into its final products. Pre-VP2 is first partially cleaved, and may be completely processed by VP4 upon capsid maturation. Functionally, capsid protein VP3 plays a key role in virion assembly by providing a scaffold for the capsid made of VP2. May self-assemble to form a T=4-like icosahedral inner-capsid composed of at least 180 trimers. Plays a role in genomic RNA packaging by recruiting VP1 into the capsid and interacting with the dsRNA genome segments to form a ribonucleoprotein complex. Additionally, the interaction of the VP3 C-terminal tail with VP1 removes the inherent structural blockade of the polymerase active site. Thus, VP3 can also function as a transcriptional activator. In terms of biological role, structural peptide 1 is a small peptide derived from pre-VP2 C-terminus. It destabilizes and perforates cell membranes, suggesting a role during entry. Its function is as follows. Structural peptide 2 is a small peptide derived from pre-VP2 C-terminus. It is not essential for the virus viability, but viral growth is affected when missing. Structural peptide 3 is a small peptide derived from pre-VP2 C-terminus. It is not essential for the virus viability, but viral growth is affected when missing. In Avian infectious bursal disease virus (isolate Chicken/UK/UK661/1989) (IBDV), this protein is Structural polyprotein.